The chain runs to 208 residues: Small ribosomal subunit protein uS5 (208 aa).

Over residues 1–19 (MTDSNNQSPNKKTSGSSGA) the composition is skewed to polar residues. The disordered stretch occupies residues 1-54 (MTDSNNQSPNKKTSGSSGAPTAADGRQENRRSRGEKRGGRRDRRGQERDSEWQE). Composition is skewed to basic and acidic residues over residues 25–37 (GRQE…GEKR) and 44–54 (RGQERDSEWQE). In terms of domain architecture, S5 DRBM spans 52–115 (WQERVVQIRR…ADGKKHLVRV (64 aa)).

It belongs to the universal ribosomal protein uS5 family. In terms of assembly, part of the 30S ribosomal subunit. Contacts proteins S4 and S8.

With S4 and S12 plays an important role in translational accuracy. Its function is as follows. Located at the back of the 30S subunit body where it stabilizes the conformation of the head with respect to the body. This is Small ribosomal subunit protein uS5 from Prochlorococcus marinus (strain NATL1A).